Consider the following 341-residue polypeptide: Guanine nucleotide-binding protein subunit beta (341 aa).

7 WD repeats span residues 54-84 (GHLA…IVWD), 96-126 (LRSS…SIYS), 142-171 (GHTG…ALWD), 183-213 (GHTG…KLWD), 225-255 (GHES…RLFD), 269-299 (NIIC…NVWD), and 311-341 (GHDN…KIWN).

This sequence belongs to the WD repeat G protein beta family. As to quaternary structure, g proteins are composed of 3 units, alpha, beta and gamma.

Functionally, guanine nucleotide-binding proteins (G proteins) are involved as a modulator or transducer in various transmembrane signaling systems. The beta and gamma chains are required for the GTPase activity, for replacement of GDP by GTP, and for G protein-effector interaction. This is Guanine nucleotide-binding protein subunit beta from Lymnaea stagnalis (Great pond snail).